Here is a 906-residue protein sequence, read N- to C-terminus: Protein translocase subunit SecA (906 aa).

Residues Gln-86, 104–108, and Asp-499 each bind ATP; that span reads GEGKT. Residues 863–887 form a disordered region; that stretch reads PVVSRIDPKDRNPDDPTSWGRVSRN. Residues Cys-890, Cys-892, Cys-901, and His-902 each coordinate Zn(2+).

It belongs to the SecA family. In terms of assembly, monomer and homodimer. Part of the essential Sec protein translocation apparatus which comprises SecA, SecYEG and auxiliary proteins SecDF-YajC and YidC. Zn(2+) is required as a cofactor.

It is found in the cell inner membrane. It localises to the cytoplasm. It carries out the reaction ATP + H2O + cellular proteinSide 1 = ADP + phosphate + cellular proteinSide 2.. In terms of biological role, part of the Sec protein translocase complex. Interacts with the SecYEG preprotein conducting channel. Has a central role in coupling the hydrolysis of ATP to the transfer of proteins into and across the cell membrane, serving both as a receptor for the preprotein-SecB complex and as an ATP-driven molecular motor driving the stepwise translocation of polypeptide chains across the membrane. The polypeptide is Protein translocase subunit SecA (Rickettsia rickettsii (strain Iowa)).